The primary structure comprises 251 residues: uncharacterized protein (251 aa).

14 to 37 (VLGGTSAIGLATARRLIARGARLV) lines the NADP(+) pocket. S145 is a binding site for substrate. Y158 (proton acceptor) is an active-site residue.

The protein belongs to the short-chain dehydrogenases/reductases (SDR) family.

Functionally, may be involved in the biosynthesis of a heptaene-type antibiotic. This is an uncharacterized protein from Streptomyces coelicolor.